The sequence spans 379 residues: Succinyl-diaminopimelate desuccinylase (379 aa).

Residue histidine 70 participates in Zn(2+) binding. Aspartate 72 is a catalytic residue. Position 103 (aspartate 103) interacts with Zn(2+). Glutamate 137 acts as the Proton acceptor in catalysis. Residues glutamate 138, glutamate 166, and histidine 352 each contribute to the Zn(2+) site.

The protein belongs to the peptidase M20A family. DapE subfamily. In terms of assembly, homodimer. It depends on Zn(2+) as a cofactor. Co(2+) is required as a cofactor.

It carries out the reaction N-succinyl-(2S,6S)-2,6-diaminopimelate + H2O = (2S,6S)-2,6-diaminopimelate + succinate. It participates in amino-acid biosynthesis; L-lysine biosynthesis via DAP pathway; LL-2,6-diaminopimelate from (S)-tetrahydrodipicolinate (succinylase route): step 3/3. Functionally, catalyzes the hydrolysis of N-succinyl-L,L-diaminopimelic acid (SDAP), forming succinate and LL-2,6-diaminopimelate (DAP), an intermediate involved in the bacterial biosynthesis of lysine and meso-diaminopimelic acid, an essential component of bacterial cell walls. The chain is Succinyl-diaminopimelate desuccinylase from Shewanella baltica (strain OS195).